A 197-amino-acid chain; its full sequence is MNLIPMVIEQTNRGERSYDIYSRLLKDRIIFIGTGINDDIANSVIAQMLFLESEDPDKDIHLYINSPGGHVHAGLAIYDTMQYIRSDVSTICVGMAASMGAVLLAAGNEGKRFCLPNSRIMLHQPMGGAQGQAADVEIHAREIMKTKERLNQILAHHTGQPVEQISKDTDRDFFMSSEEAQKYGVIDDVLKRPPENS.

Ser98 acts as the Nucleophile in catalysis. His123 is a catalytic residue.

The protein belongs to the peptidase S14 family. As to quaternary structure, fourteen ClpP subunits assemble into 2 heptameric rings which stack back to back to give a disk-like structure with a central cavity, resembling the structure of eukaryotic proteasomes.

It is found in the cytoplasm. The catalysed reaction is Hydrolysis of proteins to small peptides in the presence of ATP and magnesium. alpha-casein is the usual test substrate. In the absence of ATP, only oligopeptides shorter than five residues are hydrolyzed (such as succinyl-Leu-Tyr-|-NHMec, and Leu-Tyr-Leu-|-Tyr-Trp, in which cleavage of the -Tyr-|-Leu- and -Tyr-|-Trp bonds also occurs).. Functionally, cleaves peptides in various proteins in a process that requires ATP hydrolysis. Has a chymotrypsin-like activity. Plays a major role in the degradation of misfolded proteins. The chain is ATP-dependent Clp protease proteolytic subunit from Natranaerobius thermophilus (strain ATCC BAA-1301 / DSM 18059 / JW/NM-WN-LF).